The following is a 443-amino-acid chain: ATP-dependent protease ATPase subunit HslU (443 aa).

ATP contacts are provided by residues I20, 62–67, D255, E321, and R393; that span reads GVGKTE.

This sequence belongs to the ClpX chaperone family. HslU subfamily. As to quaternary structure, a double ring-shaped homohexamer of HslV is capped on each side by a ring-shaped HslU homohexamer. The assembly of the HslU/HslV complex is dependent on binding of ATP.

It localises to the cytoplasm. Functionally, ATPase subunit of a proteasome-like degradation complex; this subunit has chaperone activity. The binding of ATP and its subsequent hydrolysis by HslU are essential for unfolding of protein substrates subsequently hydrolyzed by HslV. HslU recognizes the N-terminal part of its protein substrates and unfolds these before they are guided to HslV for hydrolysis. The protein is ATP-dependent protease ATPase subunit HslU of Helicobacter acinonychis (strain Sheeba).